A 310-amino-acid polypeptide reads, in one-letter code: Zinc transporter ZIP9 (310 aa).

The next 8 membrane-spanning stretches (helical) occupy residues 7-27 (ISLLSVAMLVGCYVAGTIPLA), 35-55 (LKLITVLGAGLLCGTALAVII), 108-128 (ACIGVSLVLGFVFMLLVDQIG), 148-168 (ITTTLGLVVHAAADGVALGAA), 178-198 (LIVFVAIMLHKAPAAFGLVSF), 212-232 (HLLVFALAAPVLAMLTFLGLS), 246-266 (GVAMLFSAGTFLYVATVHVLP), and 289-309 (VEVVALVLGCLIPLVLSVGHH).

This sequence belongs to the ZIP transporter (TC 2.A.5) family. In terms of tissue distribution, expressed in brain, liver, ovary, and testis.

The protein resides in the golgi apparatus. Its subcellular location is the trans-Golgi network membrane. The protein localises to the cell membrane. It is found in the cytoplasm. It localises to the perinuclear region. The protein resides in the mitochondrion. Its subcellular location is the nucleus. It catalyses the reaction Zn(2+)(in) = Zn(2+)(out). Its function is as follows. Has dual functions as a membrane-bound androgen receptor and as an androgen-dependent zinc transporter both of which are mediated through G protein activation and are required for the androgen-dependent apoptotic response. Upon androgen binding, mediates apoptosis by directly activating a stimulatory G protein that leads to increased cAMP levels and MAP kinase activity and which is accompanied by increased intracellular free zinc levels. The polypeptide is Zinc transporter ZIP9 (Micropogonias undulatus (Atlantic croaker)).